Consider the following 478-residue polypeptide: Solute carrier family 49 member 4 (478 aa).

The interval 1 to 27 (MGSGWSSEEEERQPLLGPGLGPAPGAA) is disordered. The Cytoplasmic portion of the chain corresponds to 1–51 (MGSGWSSEEEERQPLLGPGLGPAPGAARRGREATAVLPAAGPNPGRVYGRR). The Di-leucine motif; mediates lysosomal localization motif lies at 15–16 (LL). Residues 52 to 72 (WLVLLLFSLLAFAQGLVWNTW) traverse the membrane as a helical segment. At 73–89 (GPIQNSARQAYGFSGWD) the chain is on the lumenal side. The helical transmembrane segment at 90–110 (IALLVLWGPIGFLPCFAFMWL) threads the bilayer. Residues 111–117 (LDKRGLR) are Cytoplasmic-facing. A helical membrane pass occupies residues 118-138 (VTVLLTSFLMVLGTGLRCIPV). The Lumenal segment spans residues 139-152 (SDLALKKRLIHGGQ). Residues 153 to 173 (ILNGLAGPTVMNAAPFLSTTW) traverse the membrane as a helical segment. Over 174–184 (FSADERATATA) the chain is Cytoplasmic. Residues 185–205 (IASMLSYLGGACAFLVGPLVV) traverse the membrane as a helical segment. Residues 206-229 (PAPNGTAPLLAAESSRAHIKDRIE) lie on the Lumenal side of the membrane. N-linked (GlcNAc...) asparagine glycosylation occurs at N209. A helical transmembrane segment spans residues 230–250 (TVLYAEFGVVCLIFSATLAYF). The Cytoplasmic portion of the chain corresponds to 251–281 (PPRPPLPPSVAAASQRLSYRRSFCRLLSNLR). Residues 282–302 (FLMIALAYAIPLGVFAGWSGV) traverse the membrane as a helical segment. Topologically, residues 303 to 314 (LDLILTPVHVSQ) are lumenal. A helical transmembrane segment spans residues 315–335 (VDAGWIGFWSIVGGCVVGIAM). The Cytoplasmic portion of the chain corresponds to 336–347 (ARFADFIRGMLK). The chain crosses the membrane as a helical span at residues 348–368 (LILLLLFSGATLSSTWFTLTC). Over 369–384 (LNSITHLPLTTVTLYA) the chain is Lumenal. The helical transmembrane segment at 385-405 (SCILLGVFLNSSVPIFFELFV) threads the bilayer. The Cytoplasmic segment spans residues 406 to 414 (ETVYPVPEG). Residues 415-435 (ITCGVVTFLSNMFMGVLLFFV) traverse the membrane as a helical segment. The Lumenal portion of the chain corresponds to 436 to 442 (TFYHTEL). Residues 443 to 463 (SWFNWCLPGSCLLSLLLILCF) form a helical membrane-spanning segment. Over 464 to 478 (RESYDRLYLDVVVSV) the chain is Cytoplasmic.

It belongs to the major facilitator superfamily. Post-translationally, cleaved in lysosomes by cathepsin L between Leu-214 and Ala-261, generating a N-glycosylated N-terminal and a non-glycosylated C-terminal fragment.

Its subcellular location is the lysosome membrane. It catalyses the reaction pyridoxine(out) + n H(+)(out) = pyridoxine(in) + n H(+)(in). Functionally, mediates H(+)-dependent pyridoxine transport. This Mus musculus (Mouse) protein is Solute carrier family 49 member 4 (Slc49a4).